A 93-amino-acid polypeptide reads, in one-letter code: HIG1 domain family member 1A, mitochondrial (93 aa).

The residue at position 2 (Ser-2) is an N-acetylserine. An HIG1 domain is found at 2–93 (STNTDLSLSS…YQEFWAKRKP (92 aa)). Ser-8 carries the post-translational modification Phosphoserine. 2 helical membrane-spanning segments follow: residues 28–48 (PFVP…LYKL) and 69–89 (GFVV…EFWA). The Mitochondrial matrix segment spans residues 90-93 (KRKP).

As to quaternary structure, associates with cytochrome c oxidase (COX, complex IV); proposed complex component. Also associates with respiratory chain supercomplexes. In terms of tissue distribution, expressed in brain and spinal cord.

It localises to the mitochondrion membrane. The protein localises to the mitochondrion inner membrane. Its function is as follows. Proposed subunit of cytochrome c oxidase (COX, complex IV), which is the terminal component of the mitochondrial respiratory chain that catalyzes the reduction of oxygen to water. May play a role in the assembly of respiratory supercomplexes. In Rattus norvegicus (Rat), this protein is HIG1 domain family member 1A, mitochondrial (Higd1a).